We begin with the raw amino-acid sequence, 218 residues long: Small ribosomal subunit protein uS3c (218 aa).

One can recognise a KH type-2 domain in the interval 39–120; the sequence is IRNFMNKELL…IITCKVVGVT (82 aa).

The protein belongs to the universal ribosomal protein uS3 family. Part of the 30S ribosomal subunit.

It localises to the plastid. The protein localises to the chloroplast. This is Small ribosomal subunit protein uS3c (rps3) from Euglena gracilis.